A 466-amino-acid chain; its full sequence is Ribulose bisphosphate carboxylase large chain (466 aa).

Lysine 5 carries the N6,N6,N6-trimethyllysine modification. The substrate site is built by asparagine 114 and threonine 164. Residue lysine 166 is the Proton acceptor of the active site. Lysine 168 serves as a coordination point for substrate. Residues lysine 192, aspartate 194, and glutamate 195 each contribute to the Mg(2+) site. N6-carboxylysine is present on lysine 192. The Proton acceptor role is filled by histidine 285. Positions 286, 318, and 370 each coordinate substrate.

It belongs to the RuBisCO large chain family. Type I subfamily. Heterohexadecamer of 8 large chains and 8 small chains; disulfide-linked. The disulfide link is formed within the large subunit homodimers. It depends on Mg(2+) as a cofactor. Post-translationally, the disulfide bond which can form in the large chain dimeric partners within the hexadecamer appears to be associated with oxidative stress and protein turnover.

It localises to the plastid. The protein localises to the chloroplast. It catalyses the reaction 2 (2R)-3-phosphoglycerate + 2 H(+) = D-ribulose 1,5-bisphosphate + CO2 + H2O. The enzyme catalyses D-ribulose 1,5-bisphosphate + O2 = 2-phosphoglycolate + (2R)-3-phosphoglycerate + 2 H(+). Its function is as follows. RuBisCO catalyzes two reactions: the carboxylation of D-ribulose 1,5-bisphosphate, the primary event in carbon dioxide fixation, as well as the oxidative fragmentation of the pentose substrate in the photorespiration process. Both reactions occur simultaneously and in competition at the same active site. The polypeptide is Ribulose bisphosphate carboxylase large chain (Isophysis tasmanica).